The following is a 179-amino-acid chain: ATP-dependent protease subunit HslV (179 aa).

The active site involves Thr7. The Na(+) site is built by Gly162, Cys165, and Thr168.

The protein belongs to the peptidase T1B family. HslV subfamily. A double ring-shaped homohexamer of HslV is capped on each side by a ring-shaped HslU homohexamer. The assembly of the HslU/HslV complex is dependent on binding of ATP.

It is found in the cytoplasm. It carries out the reaction ATP-dependent cleavage of peptide bonds with broad specificity.. With respect to regulation, allosterically activated by HslU binding. Protease subunit of a proteasome-like degradation complex believed to be a general protein degrading machinery. The chain is ATP-dependent protease subunit HslV from Teredinibacter turnerae (strain ATCC 39867 / T7901).